We begin with the raw amino-acid sequence, 214 residues long: S-crystallin 1 (214 aa).

The GST N-terminal domain occupies 2–79 (PSYTLHYFNH…YLAREFGFHG (78 aa)). Residues 81-214 (NNMEMARVDF…YLQRRCRTDF (134 aa)) enclose the GST C-terminal domain.

It belongs to the GST superfamily. Lens.

In terms of biological role, S-crystallins are structural components of squids and octopi eye lens. Contains relatively little GST activity (1/1000 of that of mammalian GST enzyme). In Octopus vulgaris (Common octopus), this protein is S-crystallin 1 (OCTS1).